The chain runs to 272 residues: Secretagogin (272 aa).

EF-hand domains lie at 8-43 (LDAA…MLKK), 53-89 (ERVQ…QEEN), 101-136 (DNSV…LFLQ), 145-180 (KLDE…QENF), 193-228 (ERKR…MMEL), and 237-272 (DLDK…KHKP). 5 residues coordinate Ca(2+): D21, D23, N25, Y27, and E32. Ca(2+) is bound by residues D114, D116, S118, Y120, E125, D158, N160, D162, R164, D169, D206, S208, T210, E217, D250, N252, D254, K256, and E261.

The protein resides in the cytoplasm. In Danio rerio (Zebrafish), this protein is Secretagogin (scgn).